Reading from the N-terminus, the 518-residue chain is GMP synthase [glutamine-hydrolyzing] (518 aa).

In terms of domain architecture, Glutamine amidotransferase type-1 spans 6–200 (RLLIIDFGSQ…FVRLAGFKGD (195 aa)). Cys84 acts as the Nucleophile in catalysis. Active-site residues include His175 and Glu177. The region spanning 201 to 393 (WTMGAYREEA…LGLPESFIGR (193 aa)) is the GMPS ATP-PPase domain. 228–234 (SGGVDSS) serves as a coordination point for ATP.

As to quaternary structure, homodimer.

It carries out the reaction XMP + L-glutamine + ATP + H2O = GMP + L-glutamate + AMP + diphosphate + 2 H(+). Its pathway is purine metabolism; GMP biosynthesis; GMP from XMP (L-Gln route): step 1/1. Functionally, catalyzes the synthesis of GMP from XMP. The polypeptide is GMP synthase [glutamine-hydrolyzing] (Cereibacter sphaeroides (strain ATCC 17029 / ATH 2.4.9) (Rhodobacter sphaeroides)).